Reading from the N-terminus, the 367-residue chain is UDP-N-acetylglucosamine--N-acetylmuramyl-(pentapeptide) pyrophosphoryl-undecaprenol N-acetylglucosamine transferase (367 aa).

UDP-N-acetyl-alpha-D-glucosamine contacts are provided by residues 11–13, Asn-125, Arg-163, Ser-197, and Gln-289; that span reads TAG.

It belongs to the glycosyltransferase 28 family. MurG subfamily.

It localises to the cell membrane. The enzyme catalyses di-trans,octa-cis-undecaprenyl diphospho-N-acetyl-alpha-D-muramoyl-L-alanyl-D-glutamyl-meso-2,6-diaminopimeloyl-D-alanyl-D-alanine + UDP-N-acetyl-alpha-D-glucosamine = di-trans,octa-cis-undecaprenyl diphospho-[N-acetyl-alpha-D-glucosaminyl-(1-&gt;4)]-N-acetyl-alpha-D-muramoyl-L-alanyl-D-glutamyl-meso-2,6-diaminopimeloyl-D-alanyl-D-alanine + UDP + H(+). The protein operates within cell wall biogenesis; peptidoglycan biosynthesis. In terms of biological role, cell wall formation. Catalyzes the transfer of a GlcNAc subunit on undecaprenyl-pyrophosphoryl-MurNAc-pentapeptide (lipid intermediate I) to form undecaprenyl-pyrophosphoryl-MurNAc-(pentapeptide)GlcNAc (lipid intermediate II). The protein is UDP-N-acetylglucosamine--N-acetylmuramyl-(pentapeptide) pyrophosphoryl-undecaprenol N-acetylglucosamine transferase of Clavibacter michiganensis subsp. michiganensis (strain NCPPB 382).